The following is a 1106-amino-acid chain: Probable LRR receptor-like serine/threonine-protein kinase At1g74360 (1106 aa).

The N-terminal stretch at 1-34 is a signal peptide; that stretch reads MTMVTRVIMTDDDSQSLCFLCFLLFFFITAIAVA. Residues 35 to 736 are Extracellular-facing; it reads GDSLDSDREV…PRTLLLIWIS (702 aa). LRR repeat units lie at residues 86–109, 110–134, 136–156, 157–182, 184–204, 205–226, and 227–250; these read RSRV…NFSA, LTEL…LSRC, NLKH…LPGL, SNLE…LFCN, LVVA…IFNG, CRNL…WTGF, and GRLV…MFRG. N-linked (GlcNAc...) asparagine glycosylation is found at Asn-93 and Asn-106. N-linked (GlcNAc...) asparagine glycosylation is present at Asn-141. N-linked (GlcNAc...) asparagine glycans are attached at residues Asn-188 and Asn-193. N-linked (GlcNAc...) asparagine glycans are attached at residues Asn-242 and Asn-251. LRR repeat units follow at residues 252-275, 276-299, 300-323, 325-346, 348-371, 372-396, 398-419, 420-443, 445-468, 470-492, 566-593, 594-617, 619-640, 641-664, and 666-690; these read CTLQ…VSNC, QNLN…IGSI, SSLK…LLNL, NLVF…IFGR, TQVK…NILK, LPNL…ISQI, SLKF…EYGN, MPGL…SFGK, TSLL…IGNC, SLLW…LTRM, VRTL…ISQM, DRLS…IGQL, LAFL…IGNL, KCLQ…LNDL, and ELSK…QVAT. Residues Asn-309 and Asn-322 are each glycosylated (N-linked (GlcNAc...) asparagine). 4 N-linked (GlcNAc...) asparagine glycosylation sites follow: Asn-365, Asn-374, Asn-384, and Asn-408. N-linked (GlcNAc...) asparagine glycosylation is found at Asn-454 and Asn-467. N-linked (GlcNAc...) asparagine glycans are attached at residues Asn-623, Asn-628, Asn-652, Asn-671, Asn-709, and Asn-713. Residues 737-757 traverse the membrane as a helical segment; the sequence is LALALAFIACLVVSGIVLMVV. Over 758-1106 the chain is Cytoplasmic; that stretch reads KASREAEIDL…GLSSQGYIEM (349 aa). Residues Thr-803 and Thr-811 each carry the phosphothreonine modification. Positions 814 to 1095 constitute a Protein kinase domain; sequence FSEERVVGRG…VKISGKAELF (282 aa). Residues 820–828 and Lys-842 each bind ATP; that span reads VGRGGYGTV. Asp-941 acts as the Proton acceptor in catalysis. A Phosphotyrosine modification is found at Tyr-983. At Thr-991 the chain carries Phosphothreonine.

Belongs to the protein kinase superfamily. Ser/Thr protein kinase family.

It localises to the mitochondrion membrane. It catalyses the reaction L-seryl-[protein] + ATP = O-phospho-L-seryl-[protein] + ADP + H(+). It carries out the reaction L-threonyl-[protein] + ATP = O-phospho-L-threonyl-[protein] + ADP + H(+). This chain is Probable LRR receptor-like serine/threonine-protein kinase At1g74360, found in Arabidopsis thaliana (Mouse-ear cress).